Reading from the N-terminus, the 1985-residue chain is Treslin (1985 aa).

Disordered regions lie at residues 574–609, 791–858, 894–974, 999–1033, 1072–1156, 1184–1243, 1849–1875, and 1938–1966; these read AQKA…LKPT, EEKS…QPNK, IQET…SIVE, RRNS…RPGS, VYKT…LWGR, VKTP…PSGY, HEDS…QSRS, and FSDG…SPFR. A compositionally biased stretch (basic residues) spans 823–837; the sequence is RSAKKRRSTALARHR. The span at 964–974 shows a compositional bias: low complexity; that stretch reads SESNSNISIVE. 2 stretches are compositionally biased toward polar residues: residues 999–1026 and 1085–1097; these read RRNS…QLQQ and SKNI…QSGN. The segment covering 1105–1114 has biased composition (low complexity); it reads TPYTPRTPSR. Basic and acidic residues-rich tracts occupy residues 1144-1156 and 1191-1200; these read KPEE…LWGR and QRLESKDFRT. A compositionally biased stretch (polar residues) spans 1201–1224; it reads PSRTPTRSNNTTPAKQSMQISNTP. The span at 1225-1238 shows a compositional bias: basic and acidic residues; sequence RKSDLKHPQEHESR.

The protein belongs to the treslin family. In terms of assembly, interacts with topbp1 (via BRCT domains); interaction is cdk2-dependent. Component of the replisome complex. Post-translationally, phosphorylated during interphase. Cdk2 promotes both phosphorylation and formation of a ticrr-topbp1 complex.

The protein localises to the nucleus. Regulator of DNA replication and S/M and G2/M checkpoints. Regulates the triggering of DNA replication initiation via its interaction with topbp1 by participating in cdk2-mediated loading of cdc45l onto replication origins. Required for the transition from pre-replication complex (pre-RC) to pre-initiation complex (pre-IC). Required to prevent mitotic entry after treatment with ionizing radiation. This chain is Treslin (ticrr), found in Xenopus laevis (African clawed frog).